The sequence spans 131 residues: Small ribosomal subunit protein uS10m (131 aa).

It belongs to the universal ribosomal protein uS10 family.

Its subcellular location is the mitochondrion. The sequence is that of Small ribosomal subunit protein uS10m (mrps10) from Dictyostelium discoideum (Social amoeba).